Consider the following 77-residue polypeptide: DNA-directed RNA polymerase subunit epsilon (77 aa).

The protein belongs to the RNA polymerase subunit epsilon family. As to quaternary structure, RNAP is composed of a core of 2 alpha, a beta and a beta' subunit. The core is associated with a delta subunit, and at least one of epsilon or omega. When a sigma factor is associated with the core the holoenzyme is formed, which can initiate transcription.

It carries out the reaction RNA(n) + a ribonucleoside 5'-triphosphate = RNA(n+1) + diphosphate. Its function is as follows. A non-essential component of RNA polymerase (RNAP). The sequence is that of DNA-directed RNA polymerase subunit epsilon from Lactobacillus delbrueckii subsp. bulgaricus (strain ATCC 11842 / DSM 20081 / BCRC 10696 / JCM 1002 / NBRC 13953 / NCIMB 11778 / NCTC 12712 / WDCM 00102 / Lb 14).